The chain runs to 306 residues: sn-1-specific diacylglycerol lipase ABHD11 (306 aa).

Residues G19–E40 are disordered. The segment covering A23–S33 has biased composition (low complexity). K78 is subject to N6-succinyllysine. Catalysis depends on charge relay system residues S132, D228, and H287.

The protein belongs to the AB hydrolase superfamily. In terms of assembly, interacts with OGDH and DLST; this interaction maintains the functional lipoylation of the 2-oxoglutarate dehydrogenase complex. In terms of processing, phosphorylated. In terms of tissue distribution, ubiquitously expressed. Highly expressed in small intestine, prostate and thyroid, while aorta and colon tissues exhibit weak expression levels.

It localises to the mitochondrion. It is found in the mitochondrion matrix. The catalysed reaction is 1-octadecanoyl-2-(5Z,8Z,11Z,14Z-eicosatetraenoyl)-sn-glycerol + H2O = 2-(5Z,8Z,11Z,14Z-eicosatetraenoyl)-glycerol + octadecanoate + H(+). The enzyme catalyses a 1,2-diacyl-sn-glycerol + H2O = a 2-acylglycerol + a fatty acid + H(+). It carries out the reaction a 1,3-diacyl-sn-glycerol + H2O = a 1-acyl-sn-glycerol + a fatty acid + H(+). It catalyses the reaction 1-octadecanoyl-2-(9Z-octadecenoyl)-sn-glycerol + H2O = 2-(9Z-octadecenoyl)-glycerol + octadecanoate + H(+). The catalysed reaction is 1-octadecanoyl-2-(4Z,7Z,10Z,13Z,16Z,19Z-docosahexaenoyl)-sn-glycerol + H2O = 2-(4Z,7Z,10Z,13Z,16Z,19Z-docosahexaenoyl)-glycerol + octadecanoate + H(+). The enzyme catalyses 1,2-didecanoylglycerol + H2O = decanoylglycerol + decanoate + H(+). Its function is as follows. Catalyzes the hydrolysis of diacylglycerol in vitro and may function as a key regulator in lipid metabolism, namely by regulating the intracellular levels of diacylglycerol. 1,2-diacyl-sn-glycerols are the preferred substrate over 1,3-diacyl-sn-glycerols. The enzyme hydrolyzes stearate in preference to palmitate from the sn-1 position of 1,2-diacyl-sn-glycerols. Maintains the functional lipoylation of the 2-oxoglutarate dehydrogenase complex (OGDHc) through its interaction with the OGDHc by preventing the formation of lipoyl adducts. In addition, is also required for the expansion and differentiation of embryonic stem cells (ESCs). This chain is sn-1-specific diacylglycerol lipase ABHD11, found in Homo sapiens (Human).